Here is a 988-residue protein sequence, read N- to C-terminus: MAMDFIRIRGARTHNLKNIDLDLPRDKLIVITGLSGSGKSSLAFDTIYAEGQRRYVESLSAYARQFLSVMEKPDLDHIEGLSPAISIEQKSTSHNPRSTVGTITEIYDYLRLLYARVGQPRCPDHGFPLEAQTVSQMVDHMLTLDPEQRYMLLAPVIRDRKGEHAQVFEQLRAQGFVRVRVDGELYEIDAVPPLALRQKHTIEAVIDRFRPREDIKQRLAESFETALKLGEGMVAVQSLDDATAAPHLFSSKYSCPVCDYSLPELEPRLFSFNAPVGACPSCDGLGVAEFFDPDRVVVHPELSLSAGAVRGWDRRNAYYFQLIASLAKHYKFDVDAVWNTLPAKVRQAVLFGSGDEVISFTYFTDAGGRTTRKHRFEGILPNLERRYRETESPAVREELTKYVSQQPCPACNGTRLNRAARNVFVADRPLPELVVLPVNEALNFFRGLSLPGWRGEIASKIVKEIGERLGFLVDVGLDYLTLERKADTLSGGEAQRIRLASQIGAGLVGVMYVLDEPSIGLHQRDNERLLGTLTRLRDLGNTVIVVEHDEDAIRLADHVLDIGPGAGVHGGEICAQGTLQDILESPRSLTGQYLSGKRRIEIPKQRHKPNPKMMLHLRGATGNNLKNVDLEIPAGLLTCITGVSGSGKSTLINDTLFTLAANEINGASHTVAPHREVENLDLFDKVVDIDQSPIGRTPRSNPATYTGMFTPLRELFAQVPESRARGYSPGRFSFNVRGGRCEACQGDGMIKVEMHFLPDVYVPCDVCHGKRYNRETLEIRYKGFNISDVLQMTVEDALRLFEPVPSIARKLETLVDVGLSYIKLGQSATTLSGGEAQRVKLSKELSRRDTGRTLYILDEPTTGLHFHDIEALLGVLHKLRDEGNTVVVIEHNLDVIKTADWIVDLGPEGGHRGGTILVSGTPEDVAAHKASYTGQFLAKMLPSVKARETRPAAMANKPDARPPRKVKPEKVAKATKTATKKTAKKKAS.

ATP is bound at residue 33–40; it reads GLSGSGKS. Residues 255–282 form a C4-type zinc finger; sequence CPVCDYSLPELEPRLFSFNAPVGACPSC. 2 ABC transporter domains span residues 312-589 and 609-938; these read WDRR…PRSL and PNPK…QFLA. Residue 642–649 coordinates ATP; that stretch reads GVSGSGKS. The C4-type zinc finger occupies 741–767; sequence CEACQGDGMIKVEMHFLPDVYVPCDVC. The segment at 948–988 is disordered; it reads ETRPAAMANKPDARPPRKVKPEKVAKATKTATKKTAKKKAS. Positions 958–972 are enriched in basic and acidic residues; the sequence is PDARPPRKVKPEKVA. A compositionally biased stretch (basic residues) spans 978-988; the sequence is ATKKTAKKKAS.

Belongs to the ABC transporter superfamily. UvrA family. Forms a heterotetramer with UvrB during the search for lesions.

The protein localises to the cytoplasm. Its function is as follows. The UvrABC repair system catalyzes the recognition and processing of DNA lesions. UvrA is an ATPase and a DNA-binding protein. A damage recognition complex composed of 2 UvrA and 2 UvrB subunits scans DNA for abnormalities. When the presence of a lesion has been verified by UvrB, the UvrA molecules dissociate. This Xanthomonas campestris pv. campestris (strain ATCC 33913 / DSM 3586 / NCPPB 528 / LMG 568 / P 25) protein is UvrABC system protein A.